We begin with the raw amino-acid sequence, 164 residues long: T-cell surface glycoprotein CD3 zeta chain (164 aa).

The signal sequence occupies residues 1-21; that stretch reads MKWKVSVLACILHVRFPGAEA. Position 22 is a blocked amino end (Gln) (Gln22). The Extracellular portion of the chain corresponds to 22–30; that stretch reads QSFGLLDPK. The chain crosses the membrane as a helical span at residues 31 to 51; the sequence is LCYLLDGILFIYGVIITALYL. Residues 52–164 lie on the Cytoplasmic side of the membrane; sequence RAKFSRSAET…ALHMQTLAPR (113 aa). Ser58 is modified (phosphoserine). ITAM domains lie at 61-89, 100-128, and 131-159; these read TAAN…LEKK, QQRR…EIGT, and ERRR…LHMQ. Phosphotyrosine is present on residues Tyr72 and Tyr83. Residues 87-96 show a composition bias toward basic and acidic residues; sequence EKKRARDPEM. The interval 87 to 111 is disordered; that stretch reads EKKRARDPEMGGKQQRRRNPQEGVY. Phosphotyrosine occurs at positions 111, 123, 142, and 153. Residues 124 to 143 form a disordered region; sequence SEIGTKGERRRGKGHDGLYQ.

This sequence belongs to the CD3Z/FCER1G family. In terms of assembly, the TCR-CD3 complex is composed of a CD3D/CD3E and a CD3G/CD3E heterodimers that preferentially associate with TCRalpha and TCRbeta, respectively, to form TCRalpha/CD3E/CD3G and TCRbeta/CD3G/CD3E trimers. In turn, the hexamer interacts with CD3Z homodimer to form the TCR-CD3 complex. Alternatively, TCRalpha and TCRbeta can be replaced by TCRgamma and TCRdelta. Interacts with SLA. Interacts with SLA2. Interacts with TRAT1. Interacts with DOCK2. Interacts with SHB. Interacts with ZAP70. Interacts (tyrosine phosphorylated) with SHC1 (via SH2 domain). Interacts with PTPRC. Interacts with CRK; this interaction regulates CD3Z phosphorylation. Interacts (on T cell side) with CD81, ICAM1 and CD9 at immunological synapses between antigen-presenting cells and T cells. Interacts with CD160. Interacts with LY6E. Interacts with LY6E. The signaling subunit of immunoglobulin gamma (IgG) Fc receptor complex. As a homodimer or a heterodimer with FCER1G, associates with the ligand binding subunit FCGR3A (via transmembrane domain); this interaction is a prerequisite for Fc receptor complex expression on the cell surface. Interacts with CD5. Phosphorylated on Tyr residues after T-cell receptor triggering by LCK in association with CD4/CD8. CD3Z is expressed in normal lymphoid tissue and in peripheral blood mononuclear cells (PBMCs). Expressed also in retinal ganglion cells.

It localises to the cell membrane. Functionally, part of the TCR-CD3 complex present on T-lymphocyte cell surface that plays an essential role in adaptive immune response. When antigen presenting cells (APCs) activate T-cell receptor (TCR), TCR-mediated signals are transmitted across the cell membrane by the CD3 chains CD3D, CD3E, CD3G and CD3Z. All CD3 chains contain immunoreceptor tyrosine-based activation motifs (ITAMs) in their cytoplasmic domain. Upon TCR engagement, these motifs become phosphorylated by Src family protein tyrosine kinases LCK and FYN, resulting in the activation of downstream signaling pathways. CD3Z ITAMs phosphorylation creates multiple docking sites for the protein kinase ZAP70 leading to ZAP70 phosphorylation and its conversion into a catalytically active enzyme. Plays an important role in intrathymic T-cell differentiation. Additionally, participates in the activity-dependent synapse formation of retinal ganglion cells (RGCs) in both the retina and dorsal lateral geniculate nucleus (dLGN). The polypeptide is T-cell surface glycoprotein CD3 zeta chain (Cd247) (Mus musculus (Mouse)).